The following is a 179-amino-acid chain: UPF0227 protein VP0969 (179 aa).

It belongs to the UPF0227 family.

This is UPF0227 protein VP0969 from Vibrio parahaemolyticus serotype O3:K6 (strain RIMD 2210633).